The sequence spans 287 residues: Syntaxin-11 (287 aa).

A coiled-coil region spans residues 41 to 71; that stretch reads LESLYRVIQDIQDENQLLLIDVRRLGRQNVR. One can recognise a t-SNARE coiled-coil homology domain in the interval 204-266; that stretch reads LNEIESRHRE…GEAKAQVRKA (63 aa).

This sequence belongs to the syntaxin family. As to quaternary structure, interacts with the SNARE proteins SNAP-23 and VAMP.

The protein resides in the membrane. It is found in the golgi apparatus. Its subcellular location is the trans-Golgi network membrane. Its function is as follows. SNARE that acts to regulate protein transport between late endosomes and the trans-Golgi network. This chain is Syntaxin-11 (Stx11), found in Mus musculus (Mouse).